Here is a 369-residue protein sequence, read N- to C-terminus: Protein-glutamate methylesterase/protein-glutamine glutaminase (369 aa).

Residues 4 to 121 (KVLVVDDSSF…ARNRDEAVSL (118 aa)) form the Response regulatory domain. D55 carries the 4-aspartylphosphate modification. The span at 146–171 (ATSSARPLASRTAAPAASAPARPATT) shows a compositional bias: low complexity. The interval 146–175 (ATSSARPLASRTAAPAASAPARPATTKFRA) is disordered. One can recognise a CheB-type methylesterase domain in the interval 176 to 369 (SGKKYQLTAI…ERMLVEVGLA (194 aa)). Catalysis depends on residues S188, H215, and D311.

This sequence belongs to the CheB family. In terms of processing, phosphorylated by CheA. Phosphorylation of the N-terminal regulatory domain activates the methylesterase activity.

Its subcellular location is the cytoplasm. The enzyme catalyses [protein]-L-glutamate 5-O-methyl ester + H2O = L-glutamyl-[protein] + methanol + H(+). The catalysed reaction is L-glutaminyl-[protein] + H2O = L-glutamyl-[protein] + NH4(+). Functionally, involved in chemotaxis. Part of a chemotaxis signal transduction system that modulates chemotaxis in response to various stimuli. Catalyzes the demethylation of specific methylglutamate residues introduced into the chemoreceptors (methyl-accepting chemotaxis proteins or MCP) by CheR. Also mediates the irreversible deamidation of specific glutamine residues to glutamic acid. The chain is Protein-glutamate methylesterase/protein-glutamine glutaminase from Vibrio parahaemolyticus serotype O3:K6 (strain RIMD 2210633).